A 299-amino-acid polypeptide reads, in one-letter code: Ribosome-inactivating protein saporin-6 (299 aa).

The N-terminal stretch at 1-24 (MKIYVVATIAWILLQFSAWTTTDA) is a signal peptide. The active site involves Glu-200. A propeptide spanning residues 278–299 (SSNEANSTVRHYGPLKPTLLIT) is cleaved from the precursor. N-linked (GlcNAc...) asparagine glycosylation occurs at Asn-283.

The protein belongs to the ribosome-inactivating protein family. Type 1 RIP subfamily. In terms of tissue distribution, seeds and leaves of the plant.

It carries out the reaction Endohydrolysis of the N-glycosidic bond at one specific adenosine on the 28S rRNA.. In terms of biological role, ribosome-inactivating protein of type 1, inhibits protein synthesis in animal cells. Useful as immunotoxin for pharmacological applications. The sequence is that of Ribosome-inactivating protein saporin-6 (SAP6) from Saponaria officinalis (Common soapwort).